A 156-amino-acid chain; its full sequence is Glutamine--fructose-6-phosphate aminotransferase [isomerizing] (156 aa).

Positions 4–146 constitute an SIS domain; sequence MAHHIVPARD…VLKGTDVDQP (143 aa). Lysine 151 functions as the For Fru-6P isomerization activity in the catalytic mechanism.

As to quaternary structure, homodimer.

The protein resides in the cytoplasm. The catalysed reaction is D-fructose 6-phosphate + L-glutamine = D-glucosamine 6-phosphate + L-glutamate. Functionally, catalyzes the first step in hexosamine metabolism, converting fructose-6P into glucosamine-6P using glutamine as a nitrogen source. The protein is Glutamine--fructose-6-phosphate aminotransferase [isomerizing] (glmS) of Sphingobium yanoikuyae (Sphingomonas yanoikuyae).